Here is a 234-residue protein sequence, read N- to C-terminus: Chalcone--flavanone isomerase 2 (234 aa).

Substrate is bound by residues threonine 50, asparagine 115, and serine 192.

It belongs to the chalcone isomerase family.

It carries out the reaction a chalcone = a flavanone.. It participates in secondary metabolite biosynthesis; flavonoid biosynthesis. Functionally, catalyzes the intramolecular cyclization of bicyclic chalcones into tricyclic (S)-flavanones. Responsible for the isomerization of 4,2',4',6'-tetrahydroxychalcone (also termed chalcone) into naringenin. This chain is Chalcone--flavanone isomerase 2 (CHI2), found in Vitis vinifera (Grape).